The chain runs to 314 residues: Homoserine kinase (314 aa).

ATP is bound at residue 95–105 (PHSRGLGSSAA).

Belongs to the GHMP kinase family. Homoserine kinase subfamily.

The protein resides in the cytoplasm. The enzyme catalyses L-homoserine + ATP = O-phospho-L-homoserine + ADP + H(+). It participates in amino-acid biosynthesis; L-threonine biosynthesis; L-threonine from L-aspartate: step 4/5. Functionally, catalyzes the ATP-dependent phosphorylation of L-homoserine to L-homoserine phosphate. In Mycolicibacterium vanbaalenii (strain DSM 7251 / JCM 13017 / BCRC 16820 / KCTC 9966 / NRRL B-24157 / PYR-1) (Mycobacterium vanbaalenii), this protein is Homoserine kinase.